We begin with the raw amino-acid sequence, 79 residues long: UPF0154 protein SSP1415 (79 aa).

A helical transmembrane segment spans residues 4–24 (WLAIVLIVLALILGLVGGFFL).

The protein belongs to the UPF0154 family.

Its subcellular location is the membrane. The chain is UPF0154 protein SSP1415 from Staphylococcus saprophyticus subsp. saprophyticus (strain ATCC 15305 / DSM 20229 / NCIMB 8711 / NCTC 7292 / S-41).